The chain runs to 366 residues: Acetylserotonin O-methyltransferase 3 (366 aa).

S-adenosyl-L-homocysteine-binding residues include glycine 209, aspartate 232, aspartate 253, and lysine 267. Histidine 271 acts as the Proton acceptor in catalysis. Active-site residues include glutamate 302 and glutamate 332.

It belongs to the class I-like SAM-binding methyltransferase superfamily. Cation-independent O-methyltransferase family. Homodimer. As to expression, expressed at low levels in roots, shoots, leaves, stems and flowers.

The protein localises to the cytoplasm. The enzyme catalyses N-acetylserotonin + S-adenosyl-L-methionine = melatonin + S-adenosyl-L-homocysteine + H(+). It participates in aromatic compound metabolism; melatonin biosynthesis; melatonin from serotonin: step 1/2. Methyltransferase which catalyzes the transfer of a methyl group onto N-acetylserotonin, producing melatonin (N-acetyl-5-methoxytryptamine). This is Acetylserotonin O-methyltransferase 3 from Oryza sativa subsp. japonica (Rice).